The chain runs to 239 residues: MVIKAQSPAGFAEEYIIESIWNNRFPPGTILPAERELSELIGVTRTTLREVLQRLARDGWLTIQHGKPTKVNNFWETSGLNILETLARLDHDSVPQLIDNLLAVRTNIATIFVRTAIRNHPEKAQEILAQAQTVDDNAESFTALDYGIFRGLAFASGNPIYGLILNGLKGLYTRVGRYYFSNPEARKLALTFYSRLSTLCDEKAYDQVLDCLRAYGKESGAIWHSMQGTMPSDLAEARR.

Residues 6–74 (QSPAGFAEEY…HGKPTKVNNF (69 aa)) enclose the HTH gntR-type domain. The H-T-H motif DNA-binding region spans 34-53 (ERELSELIGVTRTTLREVLQ).

In terms of assembly, homodimer.

The protein resides in the cytoplasm. Functionally, multifunctional regulator of fatty acid metabolism. This Yersinia enterocolitica serotype O:8 / biotype 1B (strain NCTC 13174 / 8081) protein is Fatty acid metabolism regulator protein.